The following is a 384-amino-acid chain: uncharacterized protein (384 aa).

12 helical membrane-spanning segments follow: residues 22–42, 52–72, 81–101, 106–126, 143–163, 164–184, 202–222, 240–260, 276–296, 299–319, 327–347, and 352–372; these read LAFFIAGLGMAAWAPLVPFAK, LGLLLLCIGIGSMLAMPLTGV, AVILLAGAVLCLDLPLLVLMN, MAIALLVFGAAMGIIDVAMNI, FHGLFSVGGIVGAGGVSALLW, LGLNPLTAIMATVVLMIILLL, LFVFPRGWVMFIGFLCFVMFL, GMSPSQAGMGYAVFAIAMTLG, VLLGGSLCSAIGIIIAISIDS, AAIIGFMLVGFGASNVVPILF, VMPANLAVASITTIGYAGILA, and IGFIAQLSSLSVAFGCVALLL.

This sequence belongs to the major facilitator superfamily.

It localises to the membrane. This is an uncharacterized protein from Yersinia pestis.